Consider the following 221-residue polypeptide: Fructokinase (221 aa).

The protein belongs to the carbohydrate kinase PfkB family.

It carries out the reaction D-fructose + ATP = D-fructose 6-phosphate + ADP + H(+). This Salmonella thompson protein is Fructokinase (scrK).